We begin with the raw amino-acid sequence, 247 residues long: ATP synthase subunit a 1 (247 aa).

A run of 6 helical transmembrane segments spans residues Tyr32–Val52, Phe82–Ile102, Ile112–Tyr132, Leu141–Ile161, Gly181–Val201, and Ala206–Leu226.

This sequence belongs to the ATPase A chain family. As to quaternary structure, F-type ATPases have 2 components, CF(1) - the catalytic core - and CF(0) - the membrane proton channel. CF(1) has five subunits: alpha(3), beta(3), gamma(1), delta(1), epsilon(1). CF(0) has four main subunits: a, b, b' and c.

The protein resides in the cell inner membrane. Its function is as follows. Key component of the proton channel; it plays a direct role in the translocation of protons across the membrane. The polypeptide is ATP synthase subunit a 1 (Bradyrhizobium sp. (strain BTAi1 / ATCC BAA-1182)).